The sequence spans 1262 residues: Isoleucine--tRNA ligase, cytoplasmic (1262 aa).

Methionine 1 carries the N-acetylmethionine modification. The 'HIGH' region signature appears at 48–58; that stretch reads PFATGLPHYGH. The 'KMSKS' region signature appears at 600 to 604; it reads KMSKR. Lysine 603 contacts ATP. The residue at position 1049 (serine 1049) is a Phosphoserine. Position 1058 is a phosphothreonine (threonine 1058).

The protein belongs to the class-I aminoacyl-tRNA synthetase family. Part of a multisubunit complex that groups tRNA ligases for Arg (RARS1), Asp (DARS1), Gln (QARS1), Ile (IARS1), Leu (LARS1), Lys (KARS1), Met (MARS1) the bifunctional ligase for Glu and Pro (EPRS1) and the auxiliary subunits AIMP1/p43, AIMP2/p38 and EEF1E1/p18.

The protein localises to the cytoplasm. It is found in the cytosol. The enzyme catalyses tRNA(Ile) + L-isoleucine + ATP = L-isoleucyl-tRNA(Ile) + AMP + diphosphate. Its function is as follows. Catalyzes the specific attachment of an amino acid to its cognate tRNA in a 2 step reaction: the amino acid (AA) is first activated by ATP to form AA-AMP and then transferred to the acceptor end of the tRNA. The chain is Isoleucine--tRNA ligase, cytoplasmic (Iars1) from Mus musculus (Mouse).